Reading from the N-terminus, the 509-residue chain is Steroid 17-alpha-hydroxylase/17,20 lyase (509 aa).

Asparagine 202 provides a ligand contact to substrate. Cysteine 442 serves as a coordination point for heme.

It belongs to the cytochrome P450 family. It depends on heme as a cofactor.

The protein localises to the endoplasmic reticulum membrane. It is found in the microsome membrane. It catalyses the reaction a C21-steroid + reduced [NADPH--hemoprotein reductase] + O2 = a 17alpha-hydroxy-C21-steroid + oxidized [NADPH--hemoprotein reductase] + H2O + H(+). It carries out the reaction progesterone + reduced [NADPH--hemoprotein reductase] + O2 = 17alpha-hydroxyprogesterone + oxidized [NADPH--hemoprotein reductase] + H2O + H(+). The enzyme catalyses pregnenolone + reduced [NADPH--hemoprotein reductase] + O2 = 17alpha-hydroxypregnenolone + oxidized [NADPH--hemoprotein reductase] + H2O + H(+). The catalysed reaction is 17alpha-hydroxyprogesterone + reduced [NADPH--hemoprotein reductase] + O2 = androst-4-ene-3,17-dione + acetate + oxidized [NADPH--hemoprotein reductase] + H2O + 2 H(+). It catalyses the reaction 17alpha-hydroxyprogesterone + reduced [NADPH--hemoprotein reductase] + O2 = 16alpha,17alpha-dihydroxyprogesterone + oxidized [NADPH--hemoprotein reductase] + H2O + H(+). It carries out the reaction 16alpha,17alpha-dihydroxyprogesterone + reduced [NADPH--hemoprotein reductase] + O2 = 6beta,16alpha,17alpha-trihydroxyprogesterone + oxidized [NADPH--hemoprotein reductase] + H2O + H(+). The enzyme catalyses 17alpha-hydroxypregnenolone + reduced [NADPH--hemoprotein reductase] + O2 = 3beta-hydroxyandrost-5-en-17-one + acetate + oxidized [NADPH--hemoprotein reductase] + H2O + 2 H(+). The catalysed reaction is 16alpha,17alpha-dihydroxypregnenolone + reduced [NADPH--hemoprotein reductase] + O2 = 3beta,16alpha-dihydroxy-androst-5-en-17-one + acetate + oxidized [NADPH--hemoprotein reductase] + H2O + 2 H(+). It catalyses the reaction 3beta-hydroxyandrost-5-en-17-one + reduced [NADPH--hemoprotein reductase] + O2 = 3beta,16alpha-dihydroxy-androst-5-en-17-one + oxidized [NADPH--hemoprotein reductase] + H2O + H(+). It carries out the reaction androst-4-ene-3,17-dione + reduced [NADPH--hemoprotein reductase] + O2 = 16alpha-hydroxyandrost-4-ene-3,17-dione + oxidized [NADPH--hemoprotein reductase] + H2O + H(+). The protein operates within steroid hormone biosynthesis. Its pathway is steroid biosynthesis; glucocorticoid biosynthesis. With respect to regulation, regulated predominantly by intracellular cAMP levels. The 17,20-lyase activity is stimulated by cytochrome b5, which acts as an allosteric effector increasing the Vmax of the lyase activity. Its function is as follows. A cytochrome P450 monooxygenase involved in corticoid and androgen biosynthesis. Catalyzes 17-alpha hydroxylation of C21 steroids, which is common for both pathways. A second oxidative step, required only for androgen synthesis, involves an acyl-carbon cleavage. The 17-alpha hydroxy intermediates, as part of adrenal glucocorticoids biosynthesis pathway, are precursors of cortisol. Hydroxylates steroid hormones, pregnenolone and progesterone to form 17-alpha hydroxy metabolites, followed by the cleavage of the C17-C20 bond to form C19 steroids, dehydroepiandrosterone (DHEA) and androstenedione. Has 16-alpha hydroxylase activity. Catalyzes 16-alpha hydroxylation of 17-alpha hydroxy pregnenolone, followed by the cleavage of the C17-C20 bond to form 16-alpha-hydroxy DHEA. Also 16-alpha hydroxylates androgens, relevant for estriol synthesis. Mechanistically, uses molecular oxygen inserting one oxygen atom into a substrate, and reducing the second into a water molecule, with two electrons provided by NADPH via cytochrome P450 reductase (CPR; NADPH-ferrihemoprotein reductase). This Capra hircus (Goat) protein is Steroid 17-alpha-hydroxylase/17,20 lyase (CYP17A1).